Consider the following 74-residue polypeptide: Large ribosomal subunit protein bL31 (74 aa).

Positions 16, 18, 38, and 41 each coordinate Zn(2+).

This sequence belongs to the bacterial ribosomal protein bL31 family. Type A subfamily. As to quaternary structure, part of the 50S ribosomal subunit. It depends on Zn(2+) as a cofactor.

Functionally, binds the 23S rRNA. The sequence is that of Large ribosomal subunit protein bL31 (rpmE) from Streptomyces coelicolor (strain ATCC BAA-471 / A3(2) / M145).